A 267-amino-acid polypeptide reads, in one-letter code: MSTKSYSERAAAHRSPVAAKLLNLMEEKKSNLCASLDVRKTAELLRLVEVLGPYICLLKTHVDILEDFSFENTIVPLKQLAEKHKFLIFEDRKFADIGNTVKLQYTSGVYRIAEWSDITNAHGVTGAGIVAGLKQGAEEVTKEPRGLLMLAELSSKGSLAHGEYTRGTVEIAKSDKDFVIGFIAQNDMGGREEGYDWLIMTPGVGLDDKGDALGQQYRTVDEVVAGGSDIIIVGRGLFAKGRDPVVEGERYRKAGWDAYLKRVGRSA.

Substrate contacts are provided by residues Asp37, 59–61 (KTH), 91–100 (DRKFADIGNT), Tyr217, and Arg235. Residue Lys93 is the Proton donor of the active site.

Belongs to the OMP decarboxylase family.

It catalyses the reaction orotidine 5'-phosphate + H(+) = UMP + CO2. Its pathway is pyrimidine metabolism; UMP biosynthesis via de novo pathway; UMP from orotate: step 2/2. The chain is Orotidine 5'-phosphate decarboxylase (URA3) from Kluyveromyces marxianus (Yeast).